The sequence spans 347 residues: 3-isopropylmalate dehydrogenase (347 aa).

Residue 76–87 (GPKWTDPNNRPE) participates in NAD(+) binding. Residues Arg94, Arg104, Arg132, and Asp217 each coordinate substrate. Mg(2+) is bound by residues Asp217, Asp241, and Asp245. 275–287 (GSAPDIANEDKAN) lines the NAD(+) pocket.

Belongs to the isocitrate and isopropylmalate dehydrogenases family. LeuB type 1 subfamily. Homodimer. It depends on Mg(2+) as a cofactor. The cofactor is Mn(2+).

It localises to the cytoplasm. The catalysed reaction is (2R,3S)-3-isopropylmalate + NAD(+) = 4-methyl-2-oxopentanoate + CO2 + NADH. It functions in the pathway amino-acid biosynthesis; L-leucine biosynthesis; L-leucine from 3-methyl-2-oxobutanoate: step 3/4. Its function is as follows. Catalyzes the oxidation of 3-carboxy-2-hydroxy-4-methylpentanoate (3-isopropylmalate) to 3-carboxy-4-methyl-2-oxopentanoate. The product decarboxylates to 4-methyl-2 oxopentanoate. In Staphylococcus epidermidis (strain ATCC 35984 / DSM 28319 / BCRC 17069 / CCUG 31568 / BM 3577 / RP62A), this protein is 3-isopropylmalate dehydrogenase.